The sequence spans 186 residues: Protein GrpE (186 aa).

The span at 1–13 shows a compositional bias: polar residues; the sequence is MSENTQPEQNQPL. Positions 1–22 are disordered; it reads MSENTQPEQNQPLTGAPSPEEL.

It belongs to the GrpE family. As to quaternary structure, homodimer.

It is found in the cytoplasm. In terms of biological role, participates actively in the response to hyperosmotic and heat shock by preventing the aggregation of stress-denatured proteins, in association with DnaK and GrpE. It is the nucleotide exchange factor for DnaK and may function as a thermosensor. Unfolded proteins bind initially to DnaJ; upon interaction with the DnaJ-bound protein, DnaK hydrolyzes its bound ATP, resulting in the formation of a stable complex. GrpE releases ADP from DnaK; ATP binding to DnaK triggers the release of the substrate protein, thus completing the reaction cycle. Several rounds of ATP-dependent interactions between DnaJ, DnaK and GrpE are required for fully efficient folding. The polypeptide is Protein GrpE (Polaromonas sp. (strain JS666 / ATCC BAA-500)).